Reading from the N-terminus, the 71-residue chain is 26S proteasome complex subunit rpn15 (71 aa).

The interval 1–38 (MSRAALPSLENLEDDDEFEDFATENWPMKDTELDTGDD) is disordered. Over residues 11–22 (NLEDDDEFEDFA) the composition is skewed to acidic residues. The UBS-II stretch occupies residues 16 to 25 (DEFEDFATEN). Residues 38-49 (DTLWENNWDDED) form a UBS-I region.

Belongs to the DSS1/SEM1 family. As to quaternary structure, interacts with mlo3, rae1, nup98/nup189 and nup146. Interacts with rad24. Interacts (via UBSs) with ubiquitin (ubi3/ubi5).

It is found in the cytoplasm. The protein resides in the nucleus. Its function is as follows. Versatile protein that might stabilize multiple protein complexes involved in diverse pathways. Subunit of the 26S proteasome which plays a role in ubiquitin-dependent proteolysis. Acts as a ubiquitin receptor of the 26S proteasome, by interacting with ubiquitin chains linked by 'Lys-63' and 'Lys-48'. Involved in nuclear export of specific sets of mRNAs. Links the mRNA adapter mlo3 to rae1 for targeting mRNA-protein complex to the proteins of the nucleoporin complex (NPC). Involved in recombinational repair of DNA. Plays a critical role in linking repair and checkpoint factors to damaged DNA sites by specifically recruiting rad24 and cdc25 to the DSBs. This chain is 26S proteasome complex subunit rpn15 (rpn15), found in Schizosaccharomyces pombe (strain 972 / ATCC 24843) (Fission yeast).